Reading from the N-terminus, the 341-residue chain is Major histocompatibility complex class I-related protein 1 (341 aa).

Residues 1–22 (MGELMAFLLPLIIVLMVKHSDS) form the signal peptide. The interval 23 to 109 (RTHSLRYFRL…KRLQRHYNHS (87 aa)) is alpha-1. The segment at 23-201 (RTHSLRYFRL…EYGKDTLQRT (179 aa)) is antigen-binding cleft. Residues 23 to 302 (RTHSLRYFRL…QESETIPLVM (280 aa)) lie on the Extracellular side of the membrane. 5-(2-oxoethylideneamino)-6-(D-ribitylamino)uracil is bound by residues arginine 31, serine 46, and lysine 65. 5-(2-oxopropylideneamino)-6-(D-ribitylamino)uracil is bound by residues arginine 31, serine 46, and lysine 65. The 7-hydroxy-6-methyl-8-(1-D-ribityl)lumazine site is built by arginine 31, serine 46, and lysine 65. Arginine 31 contributes to the 8-(9H-purin-6-yl)-2-oxa-8-azabicyclo[3.3.1]nona-3,6-diene-4,6-dicarbaldehyde binding site. 2 residues coordinate 8-(9H-purin-6-yl)-2-oxa-8-azabicyclo[3.3.1]nona-3,6-diene-4,6-dicarbaldehyde: lysine 65 and histidine 80. Lysine 65 contacts 2-amino-4-oxopteridine-6-carbaldehyde. Lysine 65 contributes to the pyridoxal binding site. The N-linked (GlcNAc...) asparagine glycan is linked to asparagine 107. An alpha-2 region spans residues 110 to 201 (GSHTYQRMIG…EYGKDTLQRT (92 aa)). Arginine 116, tyrosine 174, and glutamine 175 together coordinate 5-(2-oxoethylideneamino)-6-(D-ribitylamino)uracil. 5-(2-oxopropylideneamino)-6-(D-ribitylamino)uracil contacts are provided by arginine 116, tyrosine 174, and glutamine 175. 3 residues coordinate 7-hydroxy-6-methyl-8-(1-D-ribityl)lumazine: arginine 116, tyrosine 174, and glutamine 175. Arginine 116 provides a ligand contact to 8-(9H-purin-6-yl)-2-oxa-8-azabicyclo[3.3.1]nona-3,6-diene-4,6-dicarbaldehyde. Disulfide bonds link cysteine 120/cysteine 183 and cysteine 222/cysteine 278. An alpha-3 region spans residues 202 to 293 (EPPLVRVNRK…GVHMVLQVPQ (92 aa)). The region spanning 203-299 (PPLVRVNRKE…QVPQESETIP (97 aa)) is the Ig-like C1-type domain. Residues 294–302 (ESETIPLVM) form a connecting peptide region. A helical transmembrane segment spans residues 303–323 (KAVSGSIVLVIVLAGVGVLVW). Over 324 to 341 (RRRPREQNGAIYLPTPDR) the chain is Cytoplasmic.

Belongs to the MHC class I family. Heterotrimer that consists of MR1, B2M and a metabolite antigen. Major classes of metabolite ligands presented by MR1 include riboflavin-related antigens, pyrimidines and ribityl lumazines, nucleobase adducts and folate derivatives. Forms reversible covalent Schiff base complexes with microbial pyrimidine-based metabolite, which serves as a molecular switch triggering complete folding, stable association with B2M and translocation of the ternary complex from endoplasmic reticulum to the plasma membrane. Alternatively, forms non-Schiff base complexes with ribityl lumazines. On antigen-presenting cells, the ternary complex interacts with TCR on MR1-restricted T cells, predominantly represented by CD8-positive and CD4- and CD8-double negative MAIT cell subsets. Interacts with TAPBP and TAPBPL chaperones in the endoplasmic reticulum. TAPBP associated or not with MHC class I peptide loading complex binds ligand-free MR1 or MR1-B2M complex, providing for stable MR1 pools ready for metabolite antigen processing. TAPBPL interacts with MR1 in a ligand-independent way; this interaction may stabilize MR1 pool and facilitate ligand loading and dissociation. MR1-B2M heterodimer adopts a topology similar to classical MHC class I molecules, with alpha-1 and alpha-2 domains of MR1 forming the antigen-binding cleft composed of two alpha-helices resting on a floor of 7-stranded anti-parallel beta-pleated sheet. The ribityl moiety of pyrimidine-based antigens is recognized by Tyr-95 residue in the CDR3 alpha loop of the invariant TRAV1-2 TCR. In terms of assembly, homodimerizes and does not associate with B2M. In terms of processing, N-glycosylated. As to expression, ubiquitous. Low expression is detected in peripheral blood B cells, T cells, monocytes and in bronchial epithelial cells (at protein level). Expressed in plasmablasts or plasma B cells in the lamina propria of ileum, appendix and colon (at protein level). Highly expressed on a subset of CD45-positive CD3-positive thymocytes (at protein level).

The protein localises to the cell membrane. It localises to the endoplasmic reticulum membrane. Its subcellular location is the golgi apparatus membrane. It is found in the early endosome membrane. The protein resides in the late endosome membrane. The protein localises to the secreted. Its activity is regulated as follows. Inhibited by pterin-based metabolites such as 6-formylpterin (6-FP, a product of folic acid photodegradation). 6-FP competitively inhibits MAIT cell activation by 5-OP-RU. Modulated by commonly prescribed anti-inflammatory drug metabolites. Inhibited by salicilates such as 3-formylsalicylic and 5-formylsalicylic acids. Activated by diclofenac and/or its hydroxy metabolites. In terms of biological role, antigen-presenting molecule specialized in displaying microbial pyrimidine-based metabolites to alpha-beta T cell receptors (TCR) on innate-type mucosal-associated invariant T (MAIT) cells. In complex with B2M preferentially presents riboflavin-derived metabolites to semi-invariant TRAV1.2 TCRs on MAIT cells, guiding immune surveillance of the microbial metabolome at mucosal epithelial barriers. Signature pyrimidine-based microbial antigens are generated via non-enzymatic condensation of metabolite intermediates of the riboflavin pathway with by-products arising from other metabolic pathways such as glycolysis. Typical potent antigenic metabolites are 5-(2-oxoethylideneamino)-6-D-ribitylaminouracil (5-OE-RU) and 5-(2-oxopropylideneamino)-6-D-ribitylaminouracil (5-OP-RU), products of condensation of 5-amino-6-D-ribityaminouracil (5-A-RU) with glyoxal or methylglyoxal by-products, respectively. May present microbial antigens to various TRAV1-2-negative MAIT cell subsets, providing for unique recognition of diverse microbes, including pathogens that do not synthesize riboflavin. Upon antigen recognition, elicits rapid innate-type MAIT cell activation to eliminate pathogenic microbes by directly killing infected cells. During T cell development, drives thymic selection and post-thymic terminal differentiation of MAIT cells in a process dependent on commensal microflora. Acts as an immune sensor of cancer cell metabolome. May present a tumor-specific or -associated metabolite essential for cancer cell survival to a 'pan-cancer' TCR consisting of TRAV38.2-DV8*TRAJ31 alpha chain paired with a TRBV25.1*TRBJ2.3 beta chain on a non-MAIT CD8-positive T cell clone (MC.7.G5), triggering T cell-mediated killing of a wide range of cancer cell types. Allele MR1*01: Presents microbial-derived metabolite 5-OP-RU to semi-invariant TRAV1.2-TRAJ33-TRBV6.1 (A-F7) TCR on MAIT cells. Presents nucleobase carbonyl adducts generated during oxidative stress. Captures M3Ade, a nucleobase adduct composed of one adenine modified by a malondialdehyde trimer, for recognition by MR1-restricted T cell clones expressing a polyclonal TCR repertoire. Displays moderate binding affinity toward tumor-enriched pyridoxal and pyridoxal 5'-phosphate antigens. Functionally, allele MR1*04: Presents tumor-enriched metabolite pyridoxal to pan-cancer 7.G5 TCR on T cells enabling preferential recognition of cancer cells. May act as an alloantigen. The sequence is that of Major histocompatibility complex class I-related protein 1 from Homo sapiens (Human).